Reading from the N-terminus, the 287-residue chain is Putative DNA-3-methyladenine glycosylase YfjP (287 aa).

The Proton acceptor role is filled by Asp242.

It belongs to the alkylbase DNA glycosidase AlkA family.

The enzyme catalyses Hydrolysis of alkylated DNA, releasing 3-methyladenine, 3-methylguanine, 7-methylguanine and 7-methyladenine.. Its function is as follows. Hydrolysis of the deoxyribose N-glycosidic bond to excise 3-methyladenine, 3-methylguanine, 7-methylguanine, O2-methylthymine, and O2-methylcytosine from the damaged DNA polymer formed by alkylation lesions. In Bacillus subtilis (strain 168), this protein is Putative DNA-3-methyladenine glycosylase YfjP (yfjP).